A 170-amino-acid chain; its full sequence is Small ribosomal subunit protein uS5 (170 aa).

The region spanning 13 to 76 is the S5 DRBM domain; sequence LLEKLVGVRR…ENARKNMISV (64 aa).

The protein belongs to the universal ribosomal protein uS5 family. In terms of assembly, part of the 30S ribosomal subunit. Contacts proteins S4 and S8.

Functionally, with S4 and S12 plays an important role in translational accuracy. Its function is as follows. Located at the back of the 30S subunit body where it stabilizes the conformation of the head with respect to the body. The polypeptide is Small ribosomal subunit protein uS5 (Nitrosococcus oceani (strain ATCC 19707 / BCRC 17464 / JCM 30415 / NCIMB 11848 / C-107)).